The following is a 429-amino-acid chain: MDRIRIIGGNKLHGTIPISGAKNAALPLMIAAMLSDETLILDNVPRLADVALLQRILGNHGVDIMAVGKRPGDHEYQGQTLHISAKNIIDTTAPYDLVSKMRASFWVIAPLLARMHEAKVSLPGGCAIGTRPVDLLIMALEKLGAELSIDAGYVVAKAPGGLKGATIEFPKVTVSGTHVALMAAALAKGTTIIANAACEPEITDVADCLNKMGAKITGAGTPRIMIEGVSKLHGARHTVLPDRIETGTYAMAVAMTGGEVQLSGARPELLQSALDVLTQAGVTITVNNDGIKVARNGAGISPVTVTTAPFPGFPTDLQAQLMALMTRAKGASHITETIFENRFMHVQELARFGARIQLDGETATIDGVAKLRGAPVMATDLRASVSLVIAALAAEGETMVNRIYHLDRGFERLEEKLSACGATIERISG.

22–23 (KN) contacts phosphoenolpyruvate. Residue R102 participates in UDP-N-acetyl-alpha-D-glucosamine binding. C126 functions as the Proton donor in the catalytic mechanism. The residue at position 126 (C126) is a 2-(S-cysteinyl)pyruvic acid O-phosphothioketal. UDP-N-acetyl-alpha-D-glucosamine contacts are provided by residues 131-135 (RPVDL), D316, and I338.

The protein belongs to the EPSP synthase family. MurA subfamily.

It is found in the cytoplasm. The enzyme catalyses phosphoenolpyruvate + UDP-N-acetyl-alpha-D-glucosamine = UDP-N-acetyl-3-O-(1-carboxyvinyl)-alpha-D-glucosamine + phosphate. It participates in cell wall biogenesis; peptidoglycan biosynthesis. Functionally, cell wall formation. Adds enolpyruvyl to UDP-N-acetylglucosamine. The polypeptide is UDP-N-acetylglucosamine 1-carboxyvinyltransferase (Rhodopseudomonas palustris (strain BisB5)).